The following is a 270-amino-acid chain: High choriolytic enzyme 1 (270 aa).

A signal peptide spans 1-20 (MNLAPSTCLLLLFLLDIAQA). Positions 21-70 (LPVWDEEGHEEGHEEGDGDDFVDITTRILTSNNNTDQLLLEGDLVAPTNR) are cleaved as a propeptide — activation peptide. Residue Asn53 is glycosylated (N-linked (GlcNAc...) asparagine). Positions 71 to 270 (NAMKCWSSSC…TRINVLYNCR (200 aa)) constitute a Peptidase M12A domain. 3 disulfide bridges follow: Cys75–Cys80, Cys120–Cys269, and Cys141–Cys161. His169 is a binding site for Zn(2+). Residue Glu170 is part of the active site. 2 residues coordinate Zn(2+): His173 and His179.

Zn(2+) is required as a cofactor.

The protein localises to the zymogen granule. The catalysed reaction is Hydrolysis of the inner layer of fish egg envelope. Also hydrolysis of casein and small molecule substrates such as succinyl-Leu-Leu-Val-Tyr-|-7-(4-methyl)coumarylamide.. Functionally, participates in the breakdown of the egg envelope, which is derived from the egg extracellular matrix, at the time of hatching. Thus allowing the newly hatched fish to swim free. HCE binds tightly to the egg envelope while it exerts the choriolytic swelling action. The sequence is that of High choriolytic enzyme 1 (hcea) from Oryzias latipes (Japanese rice fish).